Consider the following 186-residue polypeptide: MKMLYDLAKKRKTVRRFKKEKPPLEDLIYSLKVANEAPSGMNAQPWRFLIVEDEKLKGQIRRVCERSEKTFYENVRGRLKEWLDEKRFTWRKPFLKEAPYLLLVFSEKSAPYSRESVWLAVGYLLLALEEKGLGSVPYTPPDFREVEKLVNTPSELRLEVILPVGYPDDPKPKYPRNEVIVRYNTF.

FMN is bound by residues 11–15, 38–39, and serine 39; these read RKTVR and PS. Residues methionine 41, glutamate 68, tyrosine 72, and lysine 92 each coordinate 3-iodo-L-tyrosine. L-tyrosine contacts are provided by methionine 41, glutamate 68, tyrosine 72, and lysine 92. Arginine 176 is a binding site for FMN.

It belongs to the nitroreductase family. In terms of assembly, homodimer. Requires FMN as cofactor.

The enzyme catalyses 2 iodide + L-tyrosine + 2 NADP(+) = 3,5-diiodo-L-tyrosine + 2 NADPH + H(+). It carries out the reaction iodide + L-tyrosine + NADP(+) = 3-iodo-L-tyrosine + NADPH. The catalysed reaction is 3-iodo-L-tyrosine + iodide + NADP(+) = 3,5-diiodo-L-tyrosine + NADPH + H(+). It catalyses the reaction L-tyrosine + chloride + NADP(+) = 3-chloro-L-tyrosine + NADPH. The enzyme catalyses bromide + L-tyrosine + NADP(+) = 3-bromo-L-tyrosine + NADPH. In terms of biological role, catalyzes the dehalogenation of halotyrosines such as 3-bromo-L-tyrosine, 3-chloro-L-tyrosine, 3-iodo-L-tyrosine and 3,5-diiodo-L-tyrosine. Activity towards 2-iodophenol is weak. This chain is Iodotyrosine deiodinase, found in Thermotoga neapolitana (strain ATCC 49049 / DSM 4359 / NBRC 107923 / NS-E).